A 514-amino-acid chain; its full sequence is piRNA biogenesis protein EXD1 (514 aa).

The region spanning 30–122 (LHAERTWMEK…HGKLCWLQVA (93 aa)) is the 3'-5' exonuclease domain. The tract at residues 384–422 (SLNKQATNPQHLPPTEEGETSEDSSNKLICTKSKGSEDQ) is disordered.

Belongs to the EXD1 family. In terms of assembly, homodimer. Component of the PET complex, at least composed of EXD1, PIWIL2, TDRD12 and piRNAs.

It localises to the cytoplasm. RNA-binding component of the PET complex, a multiprotein complex required for the processing of piRNAs during spermatogenesis. The piRNA metabolic process mediates the repression of transposable elements during meiosis by forming complexes composed of piRNAs and Piwi proteins and governs the methylation and subsequent repression of transposable elements, preventing their mobilization, which is essential for the germline integrity. The PET complex is required during the secondary piRNAs metabolic process for the PIWIL2 slicing-triggered loading of PIWIL4 piRNAs. In the PET complex, EXD1 probably acts as an RNA adapter. EXD1 is an inactive exonuclease. This Homo sapiens (Human) protein is piRNA biogenesis protein EXD1 (EXD1).